Here is a 272-residue protein sequence, read N- to C-terminus: Dickkopf-related protein 1 (272 aa).

The N-terminal stretch at 1–31 is a signal peptide; that stretch reads MMVVCAAAAVRFLAVFTMMALCSLPLLGASA. O-linked (GalNAc...) serine glycosylation occurs at serine 62. 10 cysteine pairs are disulfide-bonded: cysteine 86/cysteine 98, cysteine 92/cysteine 114, cysteine 117/cysteine 131, cysteine 124/cysteine 136, cysteine 130/cysteine 141, cysteine 195/cysteine 207, cysteine 201/cysteine 216, cysteine 206/cysteine 243, cysteine 226/cysteine 251, and cysteine 245/cysteine 269. The DKK-type Cys-1 stretch occupies residues 86-141; that stretch reads CAEDEECGSDEYCSSPSRGAAGVGGVQICLACRKRRKRCMRHAMCCPGNYCKNGIC. The tract at residues 195-269 is DKK-type Cys-2; it reads CLRSSDCAAG…ASNSSRLHTC (75 aa). Residue asparagine 262 is glycosylated (N-linked (GlcNAc...) asparagine).

The protein belongs to the dickkopf family. In terms of assembly, interacts (via the C-terminal Cys-rich domain) with LRP5 (via beta-propeller regions 3 and 4); the interaction, enhanced by MESD and or KREMEN, antagonizes Wnt-mediated signaling. Interacts with LRP6. Forms a ternary complex with LRP6 and KREM1. Interacts with KREM1.

Its subcellular location is the secreted. In terms of biological role, antagonizes canonical Wnt signaling by inhibiting LRP5/6 interaction with Wnt and by forming a ternary complex with the transmembrane protein KREMEN that promotes internalization of LRP5/6. Inhibits the pro-apoptotic function of KREMEN1 in a Wnt-independent manner, and has anti-apoptotic activity. Plays a role in limb development; attenuates Wnt signaling in the developing limb to allow normal limb patterning. The sequence is that of Dickkopf-related protein 1 (Dkk1) from Mus musculus (Mouse).